We begin with the raw amino-acid sequence, 302 residues long: NAD kinase 1 (302 aa).

Asp-67 serves as the catalytic Proton acceptor. NAD(+) contacts are provided by residues 67–68, Arg-72, 148–149, Lys-178, and Asp-180; these read DG and ND.

This sequence belongs to the NAD kinase family. Requires a divalent metal cation as cofactor.

It is found in the cytoplasm. The enzyme catalyses NAD(+) + ATP = ADP + NADP(+) + H(+). Involved in the regulation of the intracellular balance of NAD and NADP, and is a key enzyme in the biosynthesis of NADP. Catalyzes specifically the phosphorylation on 2'-hydroxyl of the adenosine moiety of NAD to yield NADP. This chain is NAD kinase 1, found in Prochlorococcus marinus (strain NATL2A).